We begin with the raw amino-acid sequence, 185 residues long: Large ribosomal subunit protein uL5 (185 aa).

Belongs to the universal ribosomal protein uL5 family. In terms of assembly, part of the 50S ribosomal subunit; part of the 5S rRNA/L5/L18/L25 subcomplex. Contacts the 5S rRNA and the P site tRNA. Forms a bridge to the 30S subunit in the 70S ribosome.

This is one of the proteins that bind and probably mediate the attachment of the 5S RNA into the large ribosomal subunit, where it forms part of the central protuberance. In the 70S ribosome it contacts protein S13 of the 30S subunit (bridge B1b), connecting the 2 subunits; this bridge is implicated in subunit movement. Contacts the P site tRNA; the 5S rRNA and some of its associated proteins might help stabilize positioning of ribosome-bound tRNAs. This is Large ribosomal subunit protein uL5 from Magnetococcus marinus (strain ATCC BAA-1437 / JCM 17883 / MC-1).